Consider the following 70-residue polypeptide: Large ribosomal subunit protein bL31 (70 aa).

Zn(2+) contacts are provided by C16, C18, C37, and C40.

Belongs to the bacterial ribosomal protein bL31 family. Type A subfamily. As to quaternary structure, part of the 50S ribosomal subunit. The cofactor is Zn(2+).

In terms of biological role, binds the 23S rRNA. This chain is Large ribosomal subunit protein bL31, found in Enterobacter sp. (strain 638).